Consider the following 426-residue polypeptide: MNKSESLYAAAQQLIPGGVNSPVRAFNGVGGTPLFIERADGAYLYDVDEQAYIDYVGSWGPMVLGHNHPSIRDAVIAAAERGLSFGAPTEMEVQMARLVTSLVPSMDMVRMVNSGTEATMSAIRLARGYTGRDKIIKFEGCYHGHADCLLVKAGSGALTLGQPNSPGVPADFARHTLTCVYNDLSSVRTTFEQYPDEIAAIIVEPVAGNMNCVPPLPDFLPGLRALCDEFGALFIIDEVMTGFRVALAGAQSHYGVVPDLTCLGKIIGGGMPVGAFGGKREVMQALAPTGPVYQAGTLSGNPIAMAAGFACLTEVAKPGVHEKLTALTNQLADGLLAAAKAENIPLVVNQAGGMFGLFFTDAESVTCYQDVMKCDVERFKRFFHMMLEEGIYLAPSAFEAGFMSLAHTPQDIERTIEAAQICFSRL.

Residue lysine 265 is modified to N6-(pyridoxal phosphate)lysine.

The protein belongs to the class-III pyridoxal-phosphate-dependent aminotransferase family. HemL subfamily. Homodimer. Pyridoxal 5'-phosphate serves as cofactor.

It localises to the cytoplasm. The catalysed reaction is (S)-4-amino-5-oxopentanoate = 5-aminolevulinate. Its pathway is porphyrin-containing compound metabolism; protoporphyrin-IX biosynthesis; 5-aminolevulinate from L-glutamyl-tRNA(Glu): step 2/2. The sequence is that of Glutamate-1-semialdehyde 2,1-aminomutase from Pectobacterium atrosepticum (strain SCRI 1043 / ATCC BAA-672) (Erwinia carotovora subsp. atroseptica).